A 497-amino-acid polypeptide reads, in one-letter code: Glycerol kinase (497 aa).

Thr-12 contributes to the ADP binding site. Thr-12, Thr-13, and Ser-14 together coordinate ATP. Residue Thr-12 coordinates sn-glycerol 3-phosphate. Arg-16 contacts ADP. Sn-glycerol 3-phosphate-binding residues include Arg-82, Glu-83, Tyr-134, and Asp-243. Residues Arg-82, Glu-83, Tyr-134, Asp-243, and Gln-244 each coordinate glycerol. Residues Thr-265 and Gly-308 each contribute to the ADP site. Positions 265, 308, 312, and 411 each coordinate ATP. Gly-411 lines the ADP pocket.

It belongs to the FGGY kinase family.

The enzyme catalyses glycerol + ATP = sn-glycerol 3-phosphate + ADP + H(+). It functions in the pathway polyol metabolism; glycerol degradation via glycerol kinase pathway; sn-glycerol 3-phosphate from glycerol: step 1/1. Its activity is regulated as follows. Inhibited by fructose 1,6-bisphosphate (FBP). In terms of biological role, key enzyme in the regulation of glycerol uptake and metabolism. Catalyzes the phosphorylation of glycerol to yield sn-glycerol 3-phosphate. The polypeptide is Glycerol kinase (Allorhizobium ampelinum (strain ATCC BAA-846 / DSM 112012 / S4) (Agrobacterium vitis (strain S4))).